The following is a 67-amino-acid chain: MAQGTVKWFNAEKGFGFITPDDSDGDVFVHYSEIQTGGFKTLDENARVQFEIGQGAKGPQATGVTLV.

Residues 4-64 (GTVKWFNAEK…GAKGPQATGV (61 aa)) enclose the CSD domain.

The protein localises to the cytoplasm. This chain is Cold shock protein (csp), found in Arthrobacter globiformis.